A 446-amino-acid polypeptide reads, in one-letter code: Cyclin-F2-2 (446 aa).

Positions 191–216 (YNGDNDAPAPDNSTASRPQLCAPYDD) are disordered.

The protein belongs to the cyclin family. Cyclin F subfamily.

The chain is Cyclin-F2-2 (CYCF2-2) from Oryza sativa subsp. japonica (Rice).